The chain runs to 172 residues: MERAAKKEAVEQLNETFRTTGVAIVAHYSGLTVAQMQTLRKQMKQAGASVKVSKNRLAKIALEGTDVVAIGSLLKGPTVIATSSDPVAAPKVAVEFAKTNENFVVLGGSMGKTVLDVNGVKALASLPSLDELRGKLVGLLVAPATKIAQLSTAPAAKLARVVQAYASKDEAA.

The protein belongs to the universal ribosomal protein uL10 family. Part of the ribosomal stalk of the 50S ribosomal subunit. The N-terminus interacts with L11 and the large rRNA to form the base of the stalk. The C-terminus forms an elongated spine to which L12 dimers bind in a sequential fashion forming a multimeric L10(L12)X complex.

Its function is as follows. Forms part of the ribosomal stalk, playing a central role in the interaction of the ribosome with GTP-bound translation factors. This chain is Large ribosomal subunit protein uL10, found in Nitrobacter winogradskyi (strain ATCC 25391 / DSM 10237 / CIP 104748 / NCIMB 11846 / Nb-255).